Consider the following 310-residue polypeptide: Methionyl-tRNA formyltransferase (310 aa).

Residue 111-114 (SILP) coordinates (6S)-5,6,7,8-tetrahydrofolate.

This sequence belongs to the Fmt family.

It catalyses the reaction L-methionyl-tRNA(fMet) + (6R)-10-formyltetrahydrofolate = N-formyl-L-methionyl-tRNA(fMet) + (6S)-5,6,7,8-tetrahydrofolate + H(+). Functionally, attaches a formyl group to the free amino group of methionyl-tRNA(fMet). The formyl group appears to play a dual role in the initiator identity of N-formylmethionyl-tRNA by promoting its recognition by IF2 and preventing the misappropriation of this tRNA by the elongation apparatus. This chain is Methionyl-tRNA formyltransferase, found in Methylobacterium nodulans (strain LMG 21967 / CNCM I-2342 / ORS 2060).